Reading from the N-terminus, the 609-residue chain is Sterol O-acyltransferase 2 (609 aa).

Residues 1-15 (MGRTNTSDQLNAISD) are compositionally biased toward polar residues. The interval 1-41 (MGRTNTSDQLNAISDKNTKRKSLALDNEYHNNSSSEDDSSK) is disordered. 6 consecutive transmembrane segments (helical) span residues 152–172 (FFGM…NNLI), 195–215 (LFKV…AFFV), 229–249 (VGWW…LWIA), 253–273 (CLDF…VFIM), 402–422 (WSYV…MILI), and 451–471 (FLLM…FFLI). Positions 490–496 (FYGPWWS) match the FYXDWWN motif motif. 2 helical membrane-spanning segments follow: residues 534–554 (AAII…YVIF) and 589–609 (IICW…YLVF). The active site involves histidine 546.

Belongs to the membrane-bound acyltransferase family. Sterol o-acyltransferase subfamily.

The protein localises to the endoplasmic reticulum membrane. With respect to regulation, inhibited by the protoberberine derivative HWY-289 in a non-competitive manner. Inhibited by miconazole. Not inhibited by CI-976, polyoxin D, amphotericin B or nikkomycin Z. In terms of biological role, sterol O-acyltransferase that catalyzes the formation of stery esters. This is Sterol O-acyltransferase 2 from Candida albicans (Yeast).